The following is a 337-amino-acid chain: Thiazole synthase (337 aa).

The tract at residues 1–41 (MSQHPLRPAGSRPGDSPPDGSCPDGLAGGGSAVGGGGGGEA) is disordered. Positions 10–25 (GSRPGDSPPDGSCPDG) are enriched in low complexity. The segment covering 26–41 (LAGGGSAVGGGGGGEA) has biased composition (gly residues). Residue Lys144 is the Schiff-base intermediate with DXP of the active site. Residues Gly205, 231 to 232 (AG), and 253 to 254 (NT) contribute to the 1-deoxy-D-xylulose 5-phosphate site. The disordered stretch occupies residues 302 to 337 (FLGAHPSPASHPSPASPVPSVSRATSPAAVVGEASR). The segment covering 319–337 (VPSVSRATSPAAVVGEASR) has biased composition (low complexity).

The protein belongs to the ThiG family. Homotetramer. Forms heterodimers with either ThiH or ThiS.

It localises to the cytoplasm. It carries out the reaction [ThiS sulfur-carrier protein]-C-terminal-Gly-aminoethanethioate + 2-iminoacetate + 1-deoxy-D-xylulose 5-phosphate = [ThiS sulfur-carrier protein]-C-terminal Gly-Gly + 2-[(2R,5Z)-2-carboxy-4-methylthiazol-5(2H)-ylidene]ethyl phosphate + 2 H2O + H(+). It participates in cofactor biosynthesis; thiamine diphosphate biosynthesis. Functionally, catalyzes the rearrangement of 1-deoxy-D-xylulose 5-phosphate (DXP) to produce the thiazole phosphate moiety of thiamine. Sulfur is provided by the thiocarboxylate moiety of the carrier protein ThiS. In vitro, sulfur can be provided by H(2)S. In Frankia casuarinae (strain DSM 45818 / CECT 9043 / HFP020203 / CcI3), this protein is Thiazole synthase.